The sequence spans 228 residues: Cytochrome c oxidase subunit 2 (228 aa).

At 1–26 (MATWANLGLQDSSSPLMEQLNFFHDH) the chain is on the mitochondrial intermembrane side. Residues 27-47 (TLLILTMITILVGYIMGMLMF) form a helical membrane-spanning segment. Residues 48–60 (NQFTNRYLLHGQT) are Mitochondrial matrix-facing. Residues 61 to 81 (IEIIWTVLPAIILMFIALPSL) traverse the membrane as a helical segment. Residues 82-228 (RLLYLMDEIN…FIKWITNMTN (147 aa)) lie on the Mitochondrial intermembrane side of the membrane. H161, C196, E198, C200, H204, and M207 together coordinate Cu cation. Residue E198 coordinates Mg(2+).

This sequence belongs to the cytochrome c oxidase subunit 2 family. Component of the cytochrome c oxidase (complex IV, CIV), a multisubunit enzyme composed of a catalytic core of 3 subunits and several supernumerary subunits. The complex exists as a monomer or a dimer and forms supercomplexes (SCs) in the inner mitochondrial membrane with ubiquinol-cytochrome c oxidoreductase (cytochrome b-c1 complex, complex III, CIII). It depends on Cu cation as a cofactor.

It localises to the mitochondrion inner membrane. It catalyses the reaction 4 Fe(II)-[cytochrome c] + O2 + 8 H(+)(in) = 4 Fe(III)-[cytochrome c] + 2 H2O + 4 H(+)(out). Its function is as follows. Component of the cytochrome c oxidase, the last enzyme in the mitochondrial electron transport chain which drives oxidative phosphorylation. The respiratory chain contains 3 multisubunit complexes succinate dehydrogenase (complex II, CII), ubiquinol-cytochrome c oxidoreductase (cytochrome b-c1 complex, complex III, CIII) and cytochrome c oxidase (complex IV, CIV), that cooperate to transfer electrons derived from NADH and succinate to molecular oxygen, creating an electrochemical gradient over the inner membrane that drives transmembrane transport and the ATP synthase. Cytochrome c oxidase is the component of the respiratory chain that catalyzes the reduction of oxygen to water. Electrons originating from reduced cytochrome c in the intermembrane space (IMS) are transferred via the dinuclear copper A center (CU(A)) of subunit 2 and heme A of subunit 1 to the active site in subunit 1, a binuclear center (BNC) formed by heme A3 and copper B (CU(B)). The BNC reduces molecular oxygen to 2 water molecules using 4 electrons from cytochrome c in the IMS and 4 protons from the mitochondrial matrix. This Anopheles quadrimaculatus (Common malaria mosquito) protein is Cytochrome c oxidase subunit 2 (COXII).